We begin with the raw amino-acid sequence, 279 residues long: HTH-type transcriptional regulator HdfR (279 aa).

The HTH lysR-type domain occupies 1–58; the sequence is MDTELLKTFLEVSRTRHFGRAAESLYLTQSAVSFRIRQLENQLGVNLFTRHRNNIRLT. Positions 18 to 37 form a DNA-binding region, H-T-H motif; sequence FGRAAESLYLTQSAVSFRIR.

This sequence belongs to the LysR transcriptional regulatory family.

In terms of biological role, negatively regulates the transcription of the flagellar master operon flhDC by binding to the upstream region of the operon. The protein is HTH-type transcriptional regulator HdfR of Escherichia coli (strain SE11).